The primary structure comprises 1304 residues: Probable inactive serine/threonine-protein kinase fnkC (1304 aa).

Residues 33–402 enclose the Protein kinase domain; it reads FEIIRILKKD…TNLLLTHKFI (370 aa). ATP is bound by residues 39–47 and lysine 68; that span reads LKKDEFSTT. Residues 208–277 form a disordered region; it reads KDNNNNNNNN…EAEGGGGGGE (70 aa). A compositionally biased stretch (low complexity) spans 210 to 269; it reads NNNNNNNNNNNNNNNNNNNNNNNNNNNNNNANNSNNNTLNNLSIVNNNSSSSSNDNSSEA. FNIP repeat units lie at residues 514–556, 710–753, 754–797, 798–841, and 900–943; these read HSKS…LGSD, FNQL…FGRC, FNQP…FGSQ, YNQP…FGES, and YNDI…FGCD. 2 MATH domains span residues 1025 to 1154 and 1172 to 1291; these read QGSW…RIDA and NQAF…NVSI.

Belongs to the protein kinase superfamily. STE Ser/Thr protein kinase family.

The chain is Probable inactive serine/threonine-protein kinase fnkC (fnkC) from Dictyostelium discoideum (Social amoeba).